We begin with the raw amino-acid sequence, 258 residues long: Thiazole synthase (258 aa).

Residue lysine 100 is the Schiff-base intermediate with DXP of the active site. 1-deoxy-D-xylulose 5-phosphate-binding positions include glycine 161, 187–188 (AG), and 209–210 (NT).

Belongs to the ThiG family. In terms of assembly, homotetramer. Forms heterodimers with either ThiH or ThiS.

Its subcellular location is the cytoplasm. The catalysed reaction is [ThiS sulfur-carrier protein]-C-terminal-Gly-aminoethanethioate + 2-iminoacetate + 1-deoxy-D-xylulose 5-phosphate = [ThiS sulfur-carrier protein]-C-terminal Gly-Gly + 2-[(2R,5Z)-2-carboxy-4-methylthiazol-5(2H)-ylidene]ethyl phosphate + 2 H2O + H(+). It functions in the pathway cofactor biosynthesis; thiamine diphosphate biosynthesis. Its function is as follows. Catalyzes the rearrangement of 1-deoxy-D-xylulose 5-phosphate (DXP) to produce the thiazole phosphate moiety of thiamine. Sulfur is provided by the thiocarboxylate moiety of the carrier protein ThiS. In vitro, sulfur can be provided by H(2)S. The polypeptide is Thiazole synthase (Campylobacter jejuni subsp. doylei (strain ATCC BAA-1458 / RM4099 / 269.97)).